Here is a 144-residue protein sequence, read N- to C-terminus: Large ribosomal subunit protein uL15 (144 aa).

The segment at 1–53 is disordered; sequence MRLNTLSPAQGAKQAPKRVGRGIGSGLGKTGGRGHKGQNSRTGGGVRRGFEGG. The span at 21–31 shows a compositional bias: gly residues; the sequence is RGIGSGLGKTG.

This sequence belongs to the universal ribosomal protein uL15 family. Part of the 50S ribosomal subunit.

Its function is as follows. Binds to the 23S rRNA. The sequence is that of Large ribosomal subunit protein uL15 from Hamiltonella defensa subsp. Acyrthosiphon pisum (strain 5AT).